Here is a 249-residue protein sequence, read N- to C-terminus: 2-C-methyl-D-erythritol 4-phosphate cytidylyltransferase (249 aa).

This sequence belongs to the IspD/TarI cytidylyltransferase family. IspD subfamily.

It catalyses the reaction 2-C-methyl-D-erythritol 4-phosphate + CTP + H(+) = 4-CDP-2-C-methyl-D-erythritol + diphosphate. It participates in isoprenoid biosynthesis; isopentenyl diphosphate biosynthesis via DXP pathway; isopentenyl diphosphate from 1-deoxy-D-xylulose 5-phosphate: step 2/6. Catalyzes the formation of 4-diphosphocytidyl-2-C-methyl-D-erythritol from CTP and 2-C-methyl-D-erythritol 4-phosphate (MEP). This is 2-C-methyl-D-erythritol 4-phosphate cytidylyltransferase from Thermobifida fusca (strain YX).